A 95-amino-acid polypeptide reads, in one-letter code: Exodeoxyribonuclease 7 small subunit (95 aa).

The interval glutamate 65–serine 95 is disordered.

This sequence belongs to the XseB family. Heterooligomer composed of large and small subunits.

It is found in the cytoplasm. It catalyses the reaction Exonucleolytic cleavage in either 5'- to 3'- or 3'- to 5'-direction to yield nucleoside 5'-phosphates.. Functionally, bidirectionally degrades single-stranded DNA into large acid-insoluble oligonucleotides, which are then degraded further into small acid-soluble oligonucleotides. The chain is Exodeoxyribonuclease 7 small subunit from Chlorobaculum tepidum (strain ATCC 49652 / DSM 12025 / NBRC 103806 / TLS) (Chlorobium tepidum).